Reading from the N-terminus, the 406-residue chain is Bifunctional enzyme IspD/IspF (406 aa).

The interval 1 to 247 is 2-C-methyl-D-erythritol 4-phosphate cytidylyltransferase; the sequence is MSLIRVNGEA…TLFFNPAKDT (247 aa). The interval 248 to 406 is 2-C-methyl-D-erythritol 2,4-cyclodiphosphate synthase; the sequence is FIGMGFDTHA…HVSMRYKQKL (159 aa). A divalent metal cation contacts are provided by Asp254 and His256. Residues 254-256 and 280-281 contribute to the 4-CDP-2-C-methyl-D-erythritol 2-phosphate site; these read DTH and HS. His288 provides a ligand contact to a divalent metal cation. 4-CDP-2-C-methyl-D-erythritol 2-phosphate is bound by residues 302–304, 307–311, 378–381, Phe385, and Lys388; these read DIG, FPDND, and TTME.

This sequence in the N-terminal section; belongs to the IspD/TarI cytidylyltransferase family. IspD subfamily. The protein in the C-terminal section; belongs to the IspF family. A divalent metal cation is required as a cofactor.

It catalyses the reaction 2-C-methyl-D-erythritol 4-phosphate + CTP + H(+) = 4-CDP-2-C-methyl-D-erythritol + diphosphate. The catalysed reaction is 4-CDP-2-C-methyl-D-erythritol 2-phosphate = 2-C-methyl-D-erythritol 2,4-cyclic diphosphate + CMP. It participates in isoprenoid biosynthesis; isopentenyl diphosphate biosynthesis via DXP pathway; isopentenyl diphosphate from 1-deoxy-D-xylulose 5-phosphate: step 2/6. The protein operates within isoprenoid biosynthesis; isopentenyl diphosphate biosynthesis via DXP pathway; isopentenyl diphosphate from 1-deoxy-D-xylulose 5-phosphate: step 4/6. Bifunctional enzyme that catalyzes the formation of 4-diphosphocytidyl-2-C-methyl-D-erythritol from CTP and 2-C-methyl-D-erythritol 4-phosphate (MEP) (IspD), and catalyzes the conversion of 4-diphosphocytidyl-2-C-methyl-D-erythritol 2-phosphate (CDP-ME2P) to 2-C-methyl-D-erythritol 2,4-cyclodiphosphate (ME-CPP) with a corresponding release of cytidine 5-monophosphate (CMP) (IspF). The chain is Bifunctional enzyme IspD/IspF from Helicobacter pylori (strain ATCC 700392 / 26695) (Campylobacter pylori).